We begin with the raw amino-acid sequence, 436 residues long: GTPase Der (436 aa).

EngA-type G domains are found at residues Pro-4–Pro-167 and Val-176–Ser-351. GTP is bound by residues Gly-10 to Ser-17, Asp-57 to Ile-61, Asn-119 to Asp-122, Gly-182 to Ser-189, Asp-229 to Met-233, and Asn-294 to Asp-297. One can recognise a KH-like domain in the interval Met-352–Lys-436.

This sequence belongs to the TRAFAC class TrmE-Era-EngA-EngB-Septin-like GTPase superfamily. EngA (Der) GTPase family. Associates with the 50S ribosomal subunit.

Functionally, GTPase that plays an essential role in the late steps of ribosome biogenesis. The polypeptide is GTPase Der (Bacillus licheniformis (strain ATCC 14580 / DSM 13 / JCM 2505 / CCUG 7422 / NBRC 12200 / NCIMB 9375 / NCTC 10341 / NRRL NRS-1264 / Gibson 46)).